Consider the following 93-residue polypeptide: Phosphoribosyl-ATP pyrophosphatase (93 aa).

The protein belongs to the PRA-PH family.

The protein localises to the cytoplasm. It carries out the reaction 1-(5-phospho-beta-D-ribosyl)-ATP + H2O = 1-(5-phospho-beta-D-ribosyl)-5'-AMP + diphosphate + H(+). It functions in the pathway amino-acid biosynthesis; L-histidine biosynthesis; L-histidine from 5-phospho-alpha-D-ribose 1-diphosphate: step 2/9. This is Phosphoribosyl-ATP pyrophosphatase from Mycolicibacterium smegmatis (strain ATCC 700084 / mc(2)155) (Mycobacterium smegmatis).